A 185-amino-acid chain; its full sequence is Protein P21 (185 aa).

This chain is Protein P21, found in Vitis vinifera (Grape).